The sequence spans 452 residues: UPF0210 protein Dred_1672 (452 aa).

Belongs to the UPF0210 family. In terms of assembly, homodimer.

In Desulforamulus reducens (strain ATCC BAA-1160 / DSM 100696 / MI-1) (Desulfotomaculum reducens), this protein is UPF0210 protein Dred_1672.